A 284-amino-acid chain; its full sequence is MKDSYQTIGVFVRPTHYQNPLFEELEQAKEWVLKLLEDEGFESFMIDSLDGAKDARLIEKAYAFLCLGGDGTILGALRMTHSYNKPCFGVRIGNLGFLSAVELNGLKDFLQDLKQNRIKLEEHLALEGRIGKTSFYAINEIVIAKKKALGVLDIKAYVGHTPFNTYKGDGLIIATPLGSTAYNLSAHGPIVHALSQSYILTPLCDFSLTQRPLVLGAEFCLNFCAHEDALVVIDGQATYDLKANQPLYIQKSPTTTKLLQKNSRDYFKVLKEKLLWGESPSKKR.

The active-site Proton acceptor is Asp-70. NAD(+)-binding positions include 70-71 (DG), 139-140 (NE), Lys-167, Asp-169, Leu-177, 180-185 (TAYNLS), and Gln-236.

Belongs to the NAD kinase family. A divalent metal cation is required as a cofactor.

Its subcellular location is the cytoplasm. The enzyme catalyses NAD(+) + ATP = ADP + NADP(+) + H(+). Its function is as follows. Involved in the regulation of the intracellular balance of NAD and NADP, and is a key enzyme in the biosynthesis of NADP. Catalyzes specifically the phosphorylation on 2'-hydroxyl of the adenosine moiety of NAD to yield NADP. In Helicobacter pylori (strain HPAG1), this protein is NAD kinase.